The primary structure comprises 423 residues: 26S proteasome regulatory subunit 6A homolog B (423 aa).

Serine 18 is subject to Phosphoserine. 211–218 (GPPGTGKT) contributes to the ATP binding site. Glycyl lysine isopeptide (Lys-Gly) (interchain with G-Cter in ubiquitin) cross-links involve residues lysine 234, lysine 278, and lysine 415.

It belongs to the AAA ATPase family. As to quaternary structure, component of the 19S regulatory particle (RP/PA700) base subcomplex of the 26S proteasome. The 26S proteasome is composed of a core protease (CP), known as the 20S proteasome, capped at one or both ends by the 19S regulatory particle (RP/PA700). The RP/PA700 complex is composed of at least 17 different subunits in two subcomplexes, the base and the lid, which form the portions proximal and distal to the 20S proteolytic core, respectively.

The protein localises to the cytoplasm. Its subcellular location is the nucleus. In terms of biological role, the 26S proteasome is involved in the ATP-dependent degradation of ubiquitinated proteins. The regulatory (or ATPase) complex confers ATP dependency and substrate specificity to the 26S complex. This chain is 26S proteasome regulatory subunit 6A homolog B (RPT5B), found in Arabidopsis thaliana (Mouse-ear cress).